Reading from the N-terminus, the 164-residue chain is uncharacterized protein (164 aa).

The residue at position 117 (S117) is a Phosphoserine.

This is an uncharacterized protein from Bacillus subtilis (strain 168).